A 600-amino-acid chain; its full sequence is Elongation factor 4 (600 aa).

In terms of domain architecture, tr-type G spans 3–185 (KYIRNFSIIA…CLIHDIPHPQ (183 aa)). GTP is bound by residues 15–20 (DHGKST) and 132–135 (NKID).

The protein belongs to the TRAFAC class translation factor GTPase superfamily. Classic translation factor GTPase family. LepA subfamily.

Its subcellular location is the cell inner membrane. The catalysed reaction is GTP + H2O = GDP + phosphate + H(+). In terms of biological role, required for accurate and efficient protein synthesis under certain stress conditions. May act as a fidelity factor of the translation reaction, by catalyzing a one-codon backward translocation of tRNAs on improperly translocated ribosomes. Back-translocation proceeds from a post-translocation (POST) complex to a pre-translocation (PRE) complex, thus giving elongation factor G a second chance to translocate the tRNAs correctly. Binds to ribosomes in a GTP-dependent manner. The protein is Elongation factor 4 of Blochmanniella pennsylvanica (strain BPEN).